The sequence spans 152 residues: MVKAVAVLSSSEGVSGTIFFSQEGDGPTTVTGNVSGLKPGLHGFHVHALGDTTNGCMSTGPHFNPAGKEHGAPGDDNRHAGDLGNITVGEDGTASFTITDKQIPLTGANSVIGRAVVVHGDPDDLGKGGHELSKSTGNAGGRVACGIIGLQG.

Cu cation is bound by residues H45, H47, and H62. C56 and C145 are joined by a disulfide. The Zn(2+) site is built by H62, H70, H79, and D82. Residue H119 participates in Cu cation binding.

This sequence belongs to the Cu-Zn superoxide dismutase family. Homodimer. The cofactor is Cu cation. Zn(2+) is required as a cofactor.

It is found in the cytoplasm. It catalyses the reaction 2 superoxide + 2 H(+) = H2O2 + O2. Destroys radicals which are normally produced within the cells and which are toxic to biological systems. This Ipomoea batatas (Sweet potato) protein is Superoxide dismutase [Cu-Zn] (SODCC).